Reading from the N-terminus, the 200-residue chain is Recombination protein RecR (200 aa).

The C4-type zinc finger occupies 57–72; it reads CSQCRTFTEQETCAIC. A Toprim domain is found at 81–176; sequence GLLCVVEMPA…KVSRIAHGIP (96 aa).

It belongs to the RecR family.

May play a role in DNA repair. It seems to be involved in an RecBC-independent recombinational process of DNA repair. It may act with RecF and RecO. The protein is Recombination protein RecR of Actinobacillus succinogenes (strain ATCC 55618 / DSM 22257 / CCUG 43843 / 130Z).